A 1637-amino-acid polypeptide reads, in one-letter code: Surface protein (1637 aa).

Residues M1–A48 form the signal peptide. 3 disordered regions span residues A49–V305, V689–T719, and P739–L1611. Residues K56 to K65 show a composition bias toward basic and acidic residues. A compositionally biased stretch (polar residues) spans N69–S83. Composition is skewed to basic and acidic residues over residues D90–N106, E127–T180, and E188–T264. The segment covering A289–S298 has biased composition (polar residues). 5 consecutive G5 domains span residues Q654–E737, H783–E865, H911–E993, H1039–E1121, and H1167–I1250. Over residues D779–T817 the composition is skewed to basic and acidic residues. Residues Q818–T832 are compositionally biased toward low complexity. Residues D907 to T945 show a composition bias toward basic and acidic residues. Over residues Q946–T960 the composition is skewed to low complexity. Residues D1035–T1073 are compositionally biased toward basic and acidic residues. Positions Q1074–T1088 are enriched in low complexity. Positions D1163 to L1189 are enriched in basic and acidic residues. 2 stretches are compositionally biased toward acidic residues: residues T1282 to D1291 and S1302 to S1580. 141 consecutive repeat copies span residues D1301–S1302, D1303–A1304, D1305–S1306, D1307–S1308, D1309–A1310, D1311–S1312, D1313–S1314, D1315–A1316, D1317–S1318, D1319–S1320, D1321–A1322, D1323–S1324, D1325–S1326, D1327–A1328, D1329–S1330, D1331–S1332, D1333–S1334, D1335–S1336, D1337–S1338, D1339–S1340, D1341–S1342, D1343–S1344, D1345–A1346, D1347–S1348, D1349–S1350, D1351–S1352, D1353–S1354, D1355–S1356, D1357–A1358, D1359–S1360, D1361–S1362, D1363–A1364, D1365–S1366, D1367–S1368, D1369–A1370, D1371–S1372, D1373–S1374, D1375–S1376, D1377–A1378, D1379–S1380, D1381–S1382, D1383–S1384, D1385–A1386, D1387–S1388, D1389–S1390, D1391–S1392, D1393–S1394, D1395–S1396, D1397–A1398, D1399–S1400, D1401–S1402, D1403–S1404, D1405–S1406, D1407–S1408, D1409–A1410, D1411–S1412, D1413–S1414, D1415–A1416, D1417–S1418, D1419–S1420, D1421–S1422, D1423–S1424, D1425–S1426, D1427–A1428, D1429–S1430, D1431–S1432, D1433–S1434, D1435–S1436, D1437–S1438, D1439–A1440, D1441–S1442, D1443–S1444, D1445–A1446, D1447–S1448, D1449–S1450, D1451–A1452, D1453–S1454, D1455–S1456, D1457–A1458, D1459–S1460, D1461–S1462, D1463–S1464, D1465–S1466, D1467–S1468, D1469–A1470, D1471–S1472, D1473–S1474, D1475–A1476, D1477–S1478, D1479–S1480, D1481–A1482, D1483–S1484, D1485–S1486, D1487–A1488, D1489–S1490, D1491–S1492, D1493–S1494, D1495–S1496, D1497–S1498, D1499–A1500, D1501–S1502, D1503–S1504, D1505–S1506, D1507–S1508, D1509–S1510, D1511–S1512, D1513–A1514, D1515–S1516, D1517–S1518, D1519–A1520, D1521–S1522, D1523–S1524, D1525–S1526, D1527–A1528, D1529–S1530, D1531–S1532, D1533–A1534, D1535–S1536, D1537–S1538, D1539–A1540, D1541–G1542, D1543–S1544, D1545–A1546, D1547–S1548, D1549–S1550, D1551–A1552, D1553–S1554, D1555–S1556, D1557–S1558, D1559–S1560, D1561–S1562, D1563–S1564, D1565–S1566, D1567–S1568, D1569–A1570, D1571–S1572, D1573–S1574, D1575–S1576, D1577–S1578, D1579–S1580, and D1581–A1582. Residues D1301 to A1582 are 141 X 2 AA tandem repeats of D-[SAG]. Over residues D1581 to P1599 the composition is skewed to basic and acidic residues. The LPXTG sorting signal motif lies at L1598–G1602. T1601 is modified (pentaglycyl murein peptidoglycan amidated threonine). A propeptide spans G1602 to K1637 (removed by sortase).

It is found in the secreted. The protein resides in the cell wall. Functionally, could have a role in preventing adhesion at some stages during an infection. The protein is Surface protein (pls) of Staphylococcus aureus.